Reading from the N-terminus, the 138-residue chain is Small ribosomal subunit protein uS9 (138 aa).

The segment at 99–138 (DPDNRPPLKTEGYLTRDPRAKERKKYGLHKARKAPQYSKR) is disordered. The span at 100–118 (PDNRPPLKTEGYLTRDPRA) shows a compositional bias: basic and acidic residues. Over residues 119-138 (KERKKYGLHKARKAPQYSKR) the composition is skewed to basic residues.

This sequence belongs to the universal ribosomal protein uS9 family.

This is Small ribosomal subunit protein uS9 from Nostoc punctiforme (strain ATCC 29133 / PCC 73102).